Consider the following 240-residue polypeptide: 1-(5-phosphoribosyl)-5-[(5-phosphoribosylamino)methylideneamino] imidazole-4-carboxamide isomerase (240 aa).

The active-site Proton acceptor is aspartate 9. Aspartate 131 functions as the Proton donor in the catalytic mechanism.

The protein belongs to the HisA/HisF family.

The protein localises to the cytoplasm. It catalyses the reaction 1-(5-phospho-beta-D-ribosyl)-5-[(5-phospho-beta-D-ribosylamino)methylideneamino]imidazole-4-carboxamide = 5-[(5-phospho-1-deoxy-D-ribulos-1-ylimino)methylamino]-1-(5-phospho-beta-D-ribosyl)imidazole-4-carboxamide. It functions in the pathway amino-acid biosynthesis; L-histidine biosynthesis; L-histidine from 5-phospho-alpha-D-ribose 1-diphosphate: step 4/9. The polypeptide is 1-(5-phosphoribosyl)-5-[(5-phosphoribosylamino)methylideneamino] imidazole-4-carboxamide isomerase (Cytophaga hutchinsonii (strain ATCC 33406 / DSM 1761 / CIP 103989 / NBRC 15051 / NCIMB 9469 / D465)).